An 89-amino-acid polypeptide reads, in one-letter code: Small ribosomal subunit protein uS15 (89 aa).

It belongs to the universal ribosomal protein uS15 family. Part of the 30S ribosomal subunit. Forms a bridge to the 50S subunit in the 70S ribosome, contacting the 23S rRNA.

Its function is as follows. One of the primary rRNA binding proteins, it binds directly to 16S rRNA where it helps nucleate assembly of the platform of the 30S subunit by binding and bridging several RNA helices of the 16S rRNA. Forms an intersubunit bridge (bridge B4) with the 23S rRNA of the 50S subunit in the ribosome. The sequence is that of Small ribosomal subunit protein uS15 from Chlorobium luteolum (strain DSM 273 / BCRC 81028 / 2530) (Pelodictyon luteolum).